Reading from the N-terminus, the 153-residue chain is MSSGLTGPQKAALKSSWSRFMDNAVTNGTNFYMDLFKAYPDTLTPFKSLFEDVSFNQMTDHPTMKAQALVFCDGMSSFVDNLDDHEVLVVLLQKMAKLHFNRGIRIKELRDGYGVLLRYLEDHCHVEGSTKNAWEDFIAYICRVQGDFMKERL.

Position 2 is an N-acetylserine (serine 2). The Globin domain occupies 4–150 (GLTGPQKAAL…ICRVQGDFMK (147 aa)). Residue histidine 99 coordinates heme b.

It belongs to the globin family. As to quaternary structure, homotetramer.

It localises to the cytoplasm. The polypeptide is Hemoglobin-3 (Phacoides pectinatus (Thick lucine)).